A 177-amino-acid polypeptide reads, in one-letter code: Large ribosomal subunit protein uL6 (177 aa).

It belongs to the universal ribosomal protein uL6 family. In terms of assembly, part of the 50S ribosomal subunit.

This protein binds to the 23S rRNA, and is important in its secondary structure. It is located near the subunit interface in the base of the L7/L12 stalk, and near the tRNA binding site of the peptidyltransferase center. This chain is Large ribosomal subunit protein uL6, found in Aromatoleum aromaticum (strain DSM 19018 / LMG 30748 / EbN1) (Azoarcus sp. (strain EbN1)).